Consider the following 355-residue polypeptide: Galectin-9 (355 aa).

2 consecutive Galectin domains span residues 17 to 148 (FTGM…ISFQ) and 227 to 355 (FFTS…HVQT). A beta-D-galactoside-binding positions include Asn-48, His-61, Arg-65, Asn-75, 82–88 (WGTEERK), His-267, Arg-271, Thr-281, and 287–293 (WGSEERS).

Its subcellular location is the cytoplasm. The protein localises to the nucleus. The protein resides in the secreted. Its function is as follows. Binds galactosides. Has high affinity for the Forssman pentasaccharide. Ligand for HAVCR2/TIM3. Binding to HAVCR2 induces T-helper type 1 lymphocyte (Th1) death. Also stimulates bactericidal activity in infected macrophages by causing macrophage activation and IL1B secretion which restricts intracellular bacterial growth. Ligand for P4HB; the interaction retains P4HB at the cell surface of Th2 T helper cells, increasing disulfide reductase activity at the plasma membrane, altering the plasma membrane redox state and enhancing cell migration. Ligand for CD44; the interaction enhances binding of SMAD3 to the FOXP3 promoter, leading to up-regulation of FOXP3 expression and increased induced regulatory T (iTreg) cell stability and suppressive function. Promotes ability of mesenchymal stromal cells to suppress T-cell proliferation. Expands regulatory T-cells and induces cytotoxic T-cell apoptosis following virus infection. Activates ERK1/2 phosphorylation inducing cytokine (IL-6, IL-8, IL-12) and chemokine (CCL2) production in mast and dendritic cells. Inhibits degranulation and induces apoptosis of mast cells. Induces maturation and migration of dendritic cells. Inhibits natural killer (NK) cell function. Can transform NK cell phenotype from peripheral to decidual during pregnancy. Astrocyte derived galectin-9 enhances microglial TNF production. May play a role in thymocyte-epithelial interactions relevant to the biology of the thymus. May provide the molecular basis for urate flux across cell membranes, allowing urate that is formed during purine metabolism to efflux from cells and serving as an electrogenic transporter that plays an important role in renal and gastrointestinal urate excretion. Highly selective to the anion urate. In Bos taurus (Bovine), this protein is Galectin-9 (LGALS9).